Here is a 1163-residue protein sequence, read N- to C-terminus: Reticulon-4 (1163 aa).

An N-acetylmethionine modification is found at M1. Disordered regions lie at residues 1–184 and 244–270; these read MEDI…AASE and SAVS…RATN. Topologically, residues 1–989 are cytoplasmic; the sequence is MEDIDQSSLV…LYWRDIKKTG (989 aa). S7 and S16 each carry phosphoserine. The segment covering 7–16 has biased composition (low complexity); it reads SSLVSSSTDS. Acidic residues predominate over residues 31–55; it reads EPEDEEDEEEEEDEEEDDEDLEELE. Residues 62–79 show a composition bias toward low complexity; the sequence is AAGLSAAAVPPAAAAPLL. Residues 87 to 101 show a composition bias toward pro residues; sequence PPAPRGPLPAAPPAA. S107 bears the Phosphoserine mark. Over residues 138-147 the composition is skewed to pro residues; it reads ARPPPPPPAG. Phosphoserine is present on residues S149, S169, and S171. 3 positions are modified to phosphoserine: S329, S333, and S343. Phosphothreonine is present on T347. Residues 406-423 are compositionally biased toward basic and acidic residues; it reads DSLEQKSLGKDSEGRNED. 2 disordered regions span residues 406–437 and 454–474; these read DSLE…KDSS and TANT…DEKK. S425 carries the phosphoserine modification. T429 carries the phosphothreonine modification. A compositionally biased stretch (basic and acidic residues) spans 461 to 474; sequence LEDHTSENKTDEKK. Phosphoserine is present on residues S488, S689, S726, S766, and S830. At T832 the chain carries Phosphothreonine. Phosphoserine is present on residues S855, S922, and S962. A Reticulon domain is found at 976 to 1163; it reads VVDLLYWRDI…KIPGLKRKAD (188 aa). Residues 990 to 1010 form a helical membrane-spanning segment; that stretch reads VVFGASLFLLLSLTVFSIVSV. Over 1011-1104 the chain is Lumenal; that stretch reads TAYIALALLS…LMWVFTYVGA (94 aa). K1075 is subject to N6-acetyllysine. A helical membrane pass occupies residues 1105-1125; the sequence is LFNGLTLLILALISLFSIPVI. The Cytoplasmic portion of the chain corresponds to 1126 to 1163; that stretch reads YERHQVQIDHYLGLANKSVKDAMAKIQAKIPGLKRKAD.

As to quaternary structure, binds to RTN4R. Interacts with ATL1. Interacts with TMEM170A. Interacts with RTN4IP1. In terms of assembly, interacts in trans with CNTNAP1. Interacts with REEP5. Interacts with synaptic plasticity regulator PANTS; the interaction results in enhanced RTN4-mediated inhibition of AMPA receptor clustering. Interacts with GPR50. Homodimer. Interacts with BAD/Bcl-xl and BCL2. Interact with RTN3. Interacts with NGBR. Interacts with SPTLC1. Interacts with GRAMD4. Interacts with CDH5. Interacts with BACE1 and BACE2. Interacts with REEP5. Interacts with RETREG3. As to quaternary structure, interacts with BACE1 and BACE2. Interacts with TMEM33. In terms of tissue distribution, isoforms A, B and C are present in optic nerve, spinal cord and cerebral cortex. Isoforms A and B are present in dorsal root ganglion, sciatic nerve and PC12 cells after longer exposure. Isoforms B and C are detected in kidney, cartilage, skin, lung and spleen. Isoform C is expressed at high level in skeletal muscle. In adult animals isoform A is expressed mainly in the nervous system.

Its subcellular location is the endoplasmic reticulum membrane. It localises to the cell membrane. The protein resides in the synapse. The protein localises to the cell junction. Required to induce the formation and stabilization of endoplasmic reticulum (ER) tubules. They regulate membrane morphogenesis in the ER by promoting tubular ER production. They influence nuclear envelope expansion, nuclear pore complex formation and proper localization of inner nuclear membrane proteins. However each isoform have specific functions mainly depending on their tissue expression specificities. In terms of biological role, developmental neurite growth regulatory factor with a role as a negative regulator of axon-axon adhesion and growth, and as a facilitator of neurite branching. Regulates neurite fasciculation, branching and extension in the developing nervous system. Involved in down-regulation of growth, stabilization of wiring and restriction of plasticity in the adult CNS. Regulates the radial migration of cortical neurons via an RTN4R-LINGO1 containing receptor complex. Acts as a negative regulator of central nervous system angiogenesis. Inhibits spreading, migration and sprouting of primary brain microvascular endothelial cells (MVECs). Also induces the retraction of MVECs lamellipodia and filopodia in a ROCK pathway-dependent manner. Functionally, mainly function in endothelial cells and vascular smooth muscle cells, is also involved in immune system regulation. Modulator of vascular remodeling, promotes the migration of endothelial cells but inhibits the migration of vascular smooth muscle cells. Regulates endothelial sphingolipid biosynthesis with direct effects on vascular function and blood pressure. Inhibits serine palmitoyltransferase, SPTLC1, the rate-limiting enzyme of the novo sphingolipid biosynthetic pathway, thereby controlling production of endothelial sphingosine-1-phosphate (S1P). Required to promote macrophage homing and functions such as cytokine/chemokine gene expression involved in angiogenesis, arteriogenesis and tissue repair. Mediates ICAM1 induced transendothelial migration of leukocytes such as monocytes and neutrophils and acute inflammation. Necessary for immune responses triggered by nucleic acid sensing TLRs, such as TLR9, is required for proper TLR9 location to endolysosomes. Also involved in immune response to LPS. Plays a role in liver regeneration through the modulation of hepatocytes proliferation. Reduces the anti-apoptotic activity of Bcl-xl and Bcl-2. This is likely consecutive to their change in subcellular location, from the mitochondria to the endoplasmic reticulum, after binding and sequestration. With isoform C, inhibits BACE1 activity and amyloid precursor protein processing. Its function is as follows. Regulates cardiomyocyte apoptosis upon hypoxic conditions. With isoform B, inhibits BACE1 activity and amyloid precursor protein processing. This chain is Reticulon-4 (Rtn4), found in Rattus norvegicus (Rat).